The following is a 251-amino-acid chain: 1-(5-phosphoribosyl)-5-[(5-phosphoribosylamino)methylideneamino] imidazole-4-carboxamide isomerase (251 aa).

Catalysis depends on Asp-8, which acts as the Proton acceptor. The active-site Proton donor is Asp-131.

It belongs to the HisA/HisF family.

It is found in the cytoplasm. It carries out the reaction 1-(5-phospho-beta-D-ribosyl)-5-[(5-phospho-beta-D-ribosylamino)methylideneamino]imidazole-4-carboxamide = 5-[(5-phospho-1-deoxy-D-ribulos-1-ylimino)methylamino]-1-(5-phospho-beta-D-ribosyl)imidazole-4-carboxamide. It functions in the pathway amino-acid biosynthesis; L-histidine biosynthesis; L-histidine from 5-phospho-alpha-D-ribose 1-diphosphate: step 4/9. In Burkholderia cenocepacia (strain HI2424), this protein is 1-(5-phosphoribosyl)-5-[(5-phosphoribosylamino)methylideneamino] imidazole-4-carboxamide isomerase.